Consider the following 353-residue polypeptide: Putative glycosyltransferase TagX (353 aa).

Belongs to the glycosyltransferase 2 family.

The protein is Putative glycosyltransferase TagX (tagX) of Staphylococcus aureus (strain MSSA476).